The chain runs to 588 residues: Transcription factor tau 60 kDa subunit (588 aa).

Residues 399 to 588 (LPKLPENFSM…VYCGTTLEVM (190 aa)) form a sufficient for SPT15-binding region.

As to quaternary structure, heterodimer with TFC6. Component of the TFIIIC complex composed of TFC1, TFC3, TFC4, TFC6, TFC7 and TFC8. The subunits are organized in two globular domains, tauA and tauB, connected by a proteolysis-sensitive and flexible linker. Interacts with SPT15 and directly with TFC6.

Its subcellular location is the nucleus. TFIIIC mediates tRNA and 5S RNA gene activation by binding to intragenic promoter elements. Upstream of the transcription start site, TFIIIC assembles the initiation complex TFIIIB-TFIIIC-tDNA, which is sufficient for RNA polymerase III recruitment and function. Part of the tauB domain of TFIIIC that binds boxB DNA promoter sites of tRNA and similar genes. Plays a role in TFIIB assembly through its interaction with SPT15/TBP. Essential for cell viability. The polypeptide is Transcription factor tau 60 kDa subunit (TFC8) (Saccharomyces cerevisiae (strain ATCC 204508 / S288c) (Baker's yeast)).